A 279-amino-acid polypeptide reads, in one-letter code: Tryptophan synthase alpha chain (279 aa).

Residues Glu-50 and Asp-61 each act as proton acceptor in the active site.

This sequence belongs to the TrpA family. Tetramer of two alpha and two beta chains.

The enzyme catalyses (1S,2R)-1-C-(indol-3-yl)glycerol 3-phosphate + L-serine = D-glyceraldehyde 3-phosphate + L-tryptophan + H2O. It participates in amino-acid biosynthesis; L-tryptophan biosynthesis; L-tryptophan from chorismate: step 5/5. In terms of biological role, the alpha subunit is responsible for the aldol cleavage of indoleglycerol phosphate to indole and glyceraldehyde 3-phosphate. In Allorhizobium ampelinum (strain ATCC BAA-846 / DSM 112012 / S4) (Agrobacterium vitis (strain S4)), this protein is Tryptophan synthase alpha chain.